The following is a 431-amino-acid chain: Glutamate-1-semialdehyde 2,1-aminomutase (431 aa).

An N6-(pyridoxal phosphate)lysine modification is found at lysine 269.

This sequence belongs to the class-III pyridoxal-phosphate-dependent aminotransferase family. HemL subfamily. In terms of assembly, homodimer. It depends on pyridoxal 5'-phosphate as a cofactor.

Its subcellular location is the cytoplasm. The enzyme catalyses (S)-4-amino-5-oxopentanoate = 5-aminolevulinate. The protein operates within porphyrin-containing compound metabolism; protoporphyrin-IX biosynthesis; 5-aminolevulinate from L-glutamyl-tRNA(Glu): step 2/2. It functions in the pathway porphyrin-containing compound metabolism; chlorophyll biosynthesis. This chain is Glutamate-1-semialdehyde 2,1-aminomutase, found in Chlorobium phaeobacteroides (strain DSM 266 / SMG 266 / 2430).